A 470-amino-acid chain; its full sequence is Neuraminidase (470 aa).

At 1-6 (MNPNQK) the chain is on the intravirion side. The helical transmembrane segment at 7-27 (IITIGSICMAIGIISLILQIG) threads the bilayer. Residues 11 to 33 (GSICMAIGIISLILQIGNIISIW) form an involved in apical transport and lipid raft association region. At 28 to 470 (NIISIWVSHS…GAELPFTIDK (443 aa)) the chain is on the virion surface side. The segment at 36–90 (HSIQTGSQNHTGICNQRIITYENSTWVNQTYVNISNTNVVAGKDTTSMTLAGNSS) is hypervariable stalk region. N-linked (GlcNAc...) asparagine; by host glycans are attached at residues Asn44, Asn58, Asn63, Asn68, and Asn88. Residues 91–470 (LCPIRGWAIY…GAELPFTIDK (380 aa)) form a head of neuraminidase region. Intrachain disulfides connect Cys92–Cys417, Cys124–Cys129, Cys184–Cys231, Cys233–Cys238, Cys279–Cys292, Cys281–Cys290, Cys318–Cys335, and Cys421–Cys447. Substrate is bound at residue Arg118. N-linked (GlcNAc...) asparagine; by host glycosylation is present at Asn146. Catalysis depends on Asp151, which acts as the Proton donor/acceptor. Residue Arg152 participates in substrate binding. A glycan (N-linked (GlcNAc...) asparagine; by host) is linked at Asn235. Substrate is bound at residue 277–278 (EE). Arg293 is a substrate binding site. Residues Asp294, Gly298, and Asp324 each coordinate Ca(2+). The N-linked (GlcNAc...) asparagine; by host glycan is linked to Asn365. Arg368 serves as a coordination point for substrate. The active-site Nucleophile is Tyr402. N-linked (GlcNAc...) asparagine; by host glycosylation occurs at Asn455.

The protein belongs to the glycosyl hydrolase 34 family. Homotetramer. The cofactor is Ca(2+). Post-translationally, N-glycosylated.

It is found in the virion membrane. The protein resides in the host apical cell membrane. It catalyses the reaction Hydrolysis of alpha-(2-&gt;3)-, alpha-(2-&gt;6)-, alpha-(2-&gt;8)- glycosidic linkages of terminal sialic acid residues in oligosaccharides, glycoproteins, glycolipids, colominic acid and synthetic substrates.. Its activity is regulated as follows. Inhibited by the neuraminidase inhibitors zanamivir (Relenza) and oseltamivir (Tamiflu). These drugs interfere with the release of progeny virus from infected cells and are effective against all influenza strains. Resistance to neuraminidase inhibitors is quite rare. Its function is as follows. Catalyzes the removal of terminal sialic acid residues from viral and cellular glycoconjugates. Cleaves off the terminal sialic acids on the glycosylated HA during virus budding to facilitate virus release. Additionally helps virus spread through the circulation by further removing sialic acids from the cell surface. These cleavages prevent self-aggregation and ensure the efficient spread of the progeny virus from cell to cell. Otherwise, infection would be limited to one round of replication. Described as a receptor-destroying enzyme because it cleaves a terminal sialic acid from the cellular receptors. May facilitate viral invasion of the upper airways by cleaving the sialic acid moieties on the mucin of the airway epithelial cells. Likely to plays a role in the budding process through its association with lipid rafts during intracellular transport. May additionally display a raft-association independent effect on budding. Plays a role in the determination of host range restriction on replication and virulence. Sialidase activity in late endosome/lysosome traffic seems to enhance virus replication. In Aves (Human), this protein is Neuraminidase.